The following is a 326-amino-acid chain: Holliday junction branch migration complex subunit RuvB (326 aa).

The interval 1–180 (MRSISCSKEY…FGIPLRLEFY (180 aa)) is large ATPase domain (RuvB-L). Residues I19, R20, G61, K64, T65, T66, 127 to 129 (EDF), R170, Y180, and R217 contribute to the ATP site. A Mg(2+)-binding site is contributed by T65. Residues 181–251 (SFEELVDIIK…IADSALSKLG (71 aa)) form a small ATPAse domain (RuvB-S) region. The tract at residues 254–326 (KMGLNKLDVD…QGKEYLSLQY (73 aa)) is head domain (RuvB-H). DNA is bound by residues R307 and R312.

The protein belongs to the RuvB family. Homohexamer. Forms an RuvA(8)-RuvB(12)-Holliday junction (HJ) complex. HJ DNA is sandwiched between 2 RuvA tetramers; dsDNA enters through RuvA and exits via RuvB. An RuvB hexamer assembles on each DNA strand where it exits the tetramer. Each RuvB hexamer is contacted by two RuvA subunits (via domain III) on 2 adjacent RuvB subunits; this complex drives branch migration. In the full resolvosome a probable DNA-RuvA(4)-RuvB(12)-RuvC(2) complex forms which resolves the HJ.

It localises to the cytoplasm. The catalysed reaction is ATP + H2O = ADP + phosphate + H(+). In terms of biological role, the RuvA-RuvB-RuvC complex processes Holliday junction (HJ) DNA during genetic recombination and DNA repair, while the RuvA-RuvB complex plays an important role in the rescue of blocked DNA replication forks via replication fork reversal (RFR). RuvA specifically binds to HJ cruciform DNA, conferring on it an open structure. The RuvB hexamer acts as an ATP-dependent pump, pulling dsDNA into and through the RuvAB complex. RuvB forms 2 homohexamers on either side of HJ DNA bound by 1 or 2 RuvA tetramers; 4 subunits per hexamer contact DNA at a time. Coordinated motions by a converter formed by DNA-disengaged RuvB subunits stimulates ATP hydrolysis and nucleotide exchange. Immobilization of the converter enables RuvB to convert the ATP-contained energy into a lever motion, pulling 2 nucleotides of DNA out of the RuvA tetramer per ATP hydrolyzed, thus driving DNA branch migration. The RuvB motors rotate together with the DNA substrate, which together with the progressing nucleotide cycle form the mechanistic basis for DNA recombination by continuous HJ branch migration. Branch migration allows RuvC to scan DNA until it finds its consensus sequence, where it cleaves and resolves cruciform DNA. This Wolbachia sp. subsp. Brugia malayi (strain TRS) protein is Holliday junction branch migration complex subunit RuvB.